A 336-amino-acid polypeptide reads, in one-letter code: Glyceraldehyde-3-phosphate dehydrogenase, plasmid (336 aa).

NAD(+)-binding positions include 12-13, D37, R81, and S123; that span reads RI. D-glyceraldehyde 3-phosphate is bound by residues 154–156 and T185; that span reads SCT. The Nucleophile role is filled by C155. N186 provides a ligand contact to NAD(+). Residues R200, 213–214, and R236 contribute to the D-glyceraldehyde 3-phosphate site; that span reads TG. N317 contacts NAD(+).

The protein belongs to the glyceraldehyde-3-phosphate dehydrogenase family. As to quaternary structure, homotetramer.

The catalysed reaction is D-glyceraldehyde 3-phosphate + phosphate + NAD(+) = (2R)-3-phospho-glyceroyl phosphate + NADH + H(+). It functions in the pathway carbohydrate biosynthesis; Calvin cycle. Could be involved in carbon fixation as a component of the Calvin cycle. Catalyzes the oxidative phosphorylation of glyceraldehyde 3-phosphate (G3P) to 1,3-bisphosphoglycerate (BPG) using the cofactor NAD. The first reaction step involves the formation of a hemiacetal intermediate between G3P and a cysteine residue, and this hemiacetal intermediate is then oxidized to a thioester, with concomitant reduction of NAD to NADH. The reduced NADH is then exchanged with the second NAD, and the thioester is attacked by a nucleophilic inorganic phosphate to produce BPG. This Cupriavidus necator (strain ATCC 17699 / DSM 428 / KCTC 22496 / NCIMB 10442 / H16 / Stanier 337) (Ralstonia eutropha) protein is Glyceraldehyde-3-phosphate dehydrogenase, plasmid (cbbGP).